Consider the following 422-residue polypeptide: MNSLPPSTSAVSSPVSSVDSPLSAVSSSIGSPGVPGTPSIGYGPISNSQINSSMSVSRLHAVSSSDDVKPPFGLKSVSGSGPMLSQKRMCAICGDRSSGKHYGVYSCEGCKGFFKRTVRKDLSYTCRDNKECLVDKRQRNRCQYCRYQKCLAMGMKREAVQEERQKNKERDGDYECSSSANEEMPVEKILEAETAVEHRTDLHSDATGSPNDPVTNICQAADKQLFTLVEWAKRVPHFSDVPLDDQVILLRAGWNELLIAAFSHRSISVKDEILLATGLHVPKESTHNLGVEAFFDRESSHSAEVGALFDRVLTELVCKMRDMQMDKTELGCLRAIVLFNPDAKGLTSSSEVELLREKVYASLESYCKQKYPDQQGRFAKLLLRLPALRSIGLKCLEHLFFFKLIGNTPIDTFLMEMLESPH.

Residues 1–89 (MNSLPPSTSA…SGPMLSQKRM (89 aa)) are modulating. 2 consecutive NR C4-type zinc fingers follow at residues 90 to 110 (CAICGDRSSGKHYGVYSCEGC) and 126 to 150 (CRDNKECLVDKRQRNRCQYCRYQKC). Positions 90-155 (CAICGDRSSG…RYQKCLAMGM (66 aa)) form a DNA-binding region, nuclear receptor. The interval 156–178 (KREAVQEERQKNKERDGDYECSS) is hinge. Over residues 161 to 173 (QEERQKNKERDGD) the composition is skewed to basic and acidic residues. A disordered region spans residues 161–182 (QEERQKNKERDGDYECSSSANE). The NR LBD domain maps to 181-421 (NEEMPVEKIL…TFLMEMLESP (241 aa)).

This sequence belongs to the nuclear hormone receptor family. NR2 subfamily. In terms of assembly, homodimer. Heterodimer; with a rar molecule. Binds DNA preferentially as a rar/rxr heterodimer. Heterodimerizes with rarga. As to expression, shows uniform expression from the blastula to mid-gastrula stages. At 12 hours post-fertilization (hpf), expressed ubiquitously but more weakly. At 24 hpf, restricted to the ventral diencephalon, pharangeal endoderm and trunk and tail mesoderm; mesoderm expression is in medial cells of each somite along the dorsoventral axis, forming stripes. At 48 hpf, expressed in forebrain, eye, midbrain and anterior hindbrain.

It localises to the nucleus. Functionally, receptor for retinoic acid. Retinoic acid receptors bind as heterodimers to their target response elements in response to their ligands, all-trans or 9-cis retinoic acid, and regulate gene expression in various biological processes. The rar/rxr heterodimers bind to the retinoic acid response elements (RARE) composed of tandem 5'-AGGTCA-3' sites known as DR1-DR5. The high affinity ligand for rxrs is 9-cis retinoic acid. The polypeptide is Retinoic acid receptor RXR-beta-B (rxrbb) (Danio rerio (Zebrafish)).